A 331-amino-acid polypeptide reads, in one-letter code: MSQYVICALYKFVALDNFEALRAPLLEVMEKNEVKGTLLLAREGVNGTVSGTREGMDALLAWLKSDPRLADLSYKESYDENIPFYRTKVKLKKEIVTMGVEGIDPKRVVGTYVKPQDWNALITDPEVLLIDTRNDYEVQIGKFKNAINPNTETFREFPDYVKSNLDPAKHKKVAMYCTGGIRCEKSTAYLKELGFEDVYHLEGGILKYLEDVPQEESTWEGECFVFDNRVAVDHSLNKGSYDQCHACRMPISAEDMQSEHYKKGVSCPHCYDKVSEDQLRRFAAREQQIELAKSRGEEHIGSEAAKAIKKRQAEKKLKRKNYHQHLTQGAE.

The Rhodanese domain maps to 123–217 (TDPEVLLIDT…YLEDVPQEES (95 aa)). Cys177 serves as the catalytic Cysteine persulfide intermediate. Positions 293-331 (KSRGEEHIGSEAAKAIKKRQAEKKLKRKNYHQHLTQGAE) are disordered. The span at 307-323 (AIKKRQAEKKLKRKNYH) shows a compositional bias: basic residues.

This sequence belongs to the TrhO family.

The enzyme catalyses uridine(34) in tRNA + AH2 + O2 = 5-hydroxyuridine(34) in tRNA + A + H2O. In terms of biological role, catalyzes oxygen-dependent 5-hydroxyuridine (ho5U) modification at position 34 in tRNAs. The chain is tRNA uridine(34) hydroxylase from Hahella chejuensis (strain KCTC 2396).